A 400-amino-acid chain; its full sequence is Nicotinate phosphoribosyltransferase (400 aa).

Phosphohistidine; by autocatalysis is present on histidine 220.

Belongs to the NAPRTase family. Post-translationally, transiently phosphorylated on a His residue during the reaction cycle. Phosphorylation strongly increases the affinity for substrates and increases the rate of nicotinate D-ribonucleotide production. Dephosphorylation regenerates the low-affinity form of the enzyme, leading to product release.

The enzyme catalyses nicotinate + 5-phospho-alpha-D-ribose 1-diphosphate + ATP + H2O = nicotinate beta-D-ribonucleotide + ADP + phosphate + diphosphate. It functions in the pathway cofactor biosynthesis; NAD(+) biosynthesis; nicotinate D-ribonucleotide from nicotinate: step 1/1. In terms of biological role, catalyzes the synthesis of beta-nicotinate D-ribonucleotide from nicotinate and 5-phospho-D-ribose 1-phosphate at the expense of ATP. In Escherichia coli O127:H6 (strain E2348/69 / EPEC), this protein is Nicotinate phosphoribosyltransferase.